The sequence spans 593 residues: NADH-quinone oxidoreductase subunit C/D (593 aa).

Residues 1–184 (MTADTAVSIP…DPFSLTLAKQ (184 aa)) are NADH dehydrogenase I subunit C. The interval 208 to 593 (DYMFLNLGPN…IDFVMADVDR (386 aa)) is NADH dehydrogenase I subunit D.

It in the N-terminal section; belongs to the complex I 30 kDa subunit family. In the C-terminal section; belongs to the complex I 49 kDa subunit family. NDH-1 is composed of 13 different subunits. Subunits NuoB, CD, E, F, and G constitute the peripheral sector of the complex.

The protein localises to the cell inner membrane. The catalysed reaction is a quinone + NADH + 5 H(+)(in) = a quinol + NAD(+) + 4 H(+)(out). NDH-1 shuttles electrons from NADH, via FMN and iron-sulfur (Fe-S) centers, to quinones in the respiratory chain. The immediate electron acceptor for the enzyme in this species is believed to be ubiquinone. Couples the redox reaction to proton translocation (for every two electrons transferred, four hydrogen ions are translocated across the cytoplasmic membrane), and thus conserves the redox energy in a proton gradient. The polypeptide is NADH-quinone oxidoreductase subunit C/D (Ectopseudomonas mendocina (strain ymp) (Pseudomonas mendocina)).